A 264-amino-acid chain; its full sequence is Phosphonoacetaldehyde hydrolase (264 aa).

Residue aspartate 9 is the Nucleophile of the active site. 2 residues coordinate Mg(2+): aspartate 9 and alanine 11. The active-site Schiff-base intermediate with substrate is the lysine 50. Aspartate 183 is a Mg(2+) binding site.

Belongs to the HAD-like hydrolase superfamily. PhnX family. Homodimer. Mg(2+) serves as cofactor.

It catalyses the reaction phosphonoacetaldehyde + H2O = acetaldehyde + phosphate + H(+). Functionally, involved in phosphonate degradation. This is Phosphonoacetaldehyde hydrolase from Bacillus cereus (strain AH820).